A 111-amino-acid chain; its full sequence is Estrogen receptor (111 aa).

The tract at residues proline 1 to glutamate 42 is disordered. The tract at residues proline 1 to tyrosine 49 is modulating. Residues serine 19–leucine 30 are compositionally biased toward basic and acidic residues. Phosphoserine is present on serine 32. 2 consecutive NR C4-type zinc fingers follow at residues cysteine 50–cysteine 70 and cysteine 86–cysteine 110. The nuclear receptor DNA-binding region spans cysteine 50 to tyrosine 111.

This sequence belongs to the nuclear hormone receptor family. NR3 subfamily. In terms of assembly, binds DNA as a homodimer. Can form a heterodimer with ESR2. Interacts with coactivator NCOA5. Interacts with PELP1, the interaction is enhanced by 17-beta-estradiol; the interaction increases ESR1 transcriptional activity. Interacts with NCOA7; the interaction is ligand-inducible. Interacts with AKAP13, CUEDC2, HEXIM1, KDM5A, MAP1S, SMARD1, and UBE1C. Interacts with MUC1; the interaction is stimulated by 7 beta-estradiol (E2) and enhances ESR1-mediated transcription. Interacts with DNTTIP2, and UIMC1. Interacts with KMT2D/MLL2. Interacts with ATAD2; the interaction is enhanced by estradiol. Interacts with KIF18A and LDB1. Interacts with RLIM (via its C-terminus). Interacts with MACROD1. Interacts with SH2D4A and PLCG. Interacts with SH2D4A; the interaction blocks binding to PLCG and inhibits estrogen-induced cell proliferation. Interacts with DYNLL1. Interacts with CCDC62; the interaction requires estradiol and appears to enhance the transcription of target genes. Interacts with NR2C1; the interaction prevents homodimerization of ESR1 and suppresses its transcriptional activity and cell growth. Interacts with DNAAF4. Interacts with PRMT2. Interacts with RBFOX2. Interacts with EP300; the interaction is estrogen-dependent and enhanced by CITED1. Interacts with CITED1; the interaction is estrogen-dependent. Interacts with FAM120B, FOXL2, PHB2 and SLC30A9. Interacts with coactivators NCOA3 and NCOA6. Interacts with STK3/MST2 only in the presence of SAV1 and vice-versa. Binds to CSNK1D. Interacts with NCOA2; NCOA2 can interact with ESR1 AF-1 and AF-2 domains simultaneously and mediate their transcriptional synergy. Interacts with DDX5. Interacts with NCOA1; the interaction seems to require a self-association of N-terminal and C-terminal regions. Interacts with ZNF366, DDX17, NFKB1, RELA, SP1 and SP3. Interacts with NRIP1. Interacts with GPER1; the interaction occurs in an estrogen-dependent manner. Interacts with CLOCK and the interaction is stimulated by estrogen. Interacts with TRIP4 (ufmylated); estrogen dependent. Interacts with LMTK3; the interaction phosphorylates ESR1 (in vitro) and protects it against proteasomal degradation. Interacts with CCAR2 (via N-terminus) in a ligand-independent manner. Interacts with ZFHX3. Interacts with SFR1 in a ligand-dependent and -independent manner. Interacts with DCAF13, LATS1 and DCAF1; regulates ESR1 ubiquitination and ubiquitin-mediated proteasomal degradation. Interacts (via DNA-binding domain) with POU4F2 (C-terminus); this interaction increases the estrogen receptor ESR1 transcriptional activity in a DNA- and ligand 17-beta-estradiol-independent manner. Interacts with ESRRB isoform 1. Interacts with UBE3A and WBP2. Interacts with GTF2B. Interacts with RBM39. In the absence of hormonal ligand, interacts with TACC1. Interacts with PI3KR1 or PI3KR2 and PTK2/FAK1. Interacts with SRC. Interacts with BAG1; the interaction is promoted in the absence of estradiol (17-beta-estradiol/E2). Interacts with and ubiquitinated by STUB1; the interaction is promoted in the absence of estradiol (17-beta-estradiol/E2). Interacts with NEDD8. Ubiquitinated; regulated by LATS1 via DCAF1 it leads to ESR1 proteasomal degradation. Deubiquitinated by OTUB1. Ubiquitinated by STUB1/CHIP; in the CA1 hippocampal region following loss of endogenous circulating estradiol (17-beta-estradiol/E2). Ubiquitinated by UBR5, leading to its degradation: UBR5 specifically recognizes and binds ligand-bound ESR1 when it is not associated with coactivators (NCOAs). In presence of NCOAs, the UBR5-degron is not accessible, preventing its ubiquitination and degradation. In terms of processing, dimethylated by PRMT1. Demethylated by JMJD6. Post-translationally, palmitoylated by ZDHHC7 and ZDHHC21. This modification is required for plasma membrane targeting and for rapid intracellular signaling via ERK and AKT kinases and cAMP generation, but not for signaling mediated by the nuclear hormone receptor. Phosphorylated by cyclin A/CDK2 and CK1. Phosphorylation probably enhances transcriptional activity. Dephosphorylation by PPP5C inhibits its transactivation activity. Phosphorylated by LMTK3 (in vitro).

The protein localises to the nucleus. The protein resides in the cytoplasm. Its subcellular location is the golgi apparatus. It localises to the cell membrane. Nuclear hormone receptor. The steroid hormones and their receptors are involved in the regulation of eukaryotic gene expression and affect cellular proliferation and differentiation in target tissues. Ligand-dependent nuclear transactivation involves either direct homodimer binding to a palindromic estrogen response element (ERE) sequence or association with other DNA-binding transcription factors, such as AP-1/c-Jun, c-Fos, ATF-2, Sp1 and Sp3, to mediate ERE-independent signaling. Ligand binding induces a conformational change allowing subsequent or combinatorial association with multiprotein coactivator complexes through LXXLL motifs of their respective components. Mutual transrepression occurs between the estrogen receptor (ER) and NF-kappa-B in a cell-type specific manner. Decreases NF-kappa-B DNA-binding activity and inhibits NF-kappa-B-mediated transcription from the IL6 promoter and displace RELA/p65 and associated coregulators from the promoter. Recruited to the NF-kappa-B response element of the CCL2 and IL8 promoters and can displace CREBBP. Present with NF-kappa-B components RELA/p65 and NFKB1/p50 on ERE sequences. Can also act synergistically with NF-kappa-B to activate transcription involving respective recruitment adjacent response elements; the function involves CREBBP. Can activate the transcriptional activity of TFF1. Also mediates membrane-initiated estrogen signaling involving various kinase cascades. Essential for MTA1-mediated transcriptional regulation of BRCA1 and BCAS3. Maintains neuronal survival in response to ischemic reperfusion injury when in the presence of circulating estradiol (17-beta-estradiol/E2). This chain is Estrogen receptor (ESR1), found in Ovis aries (Sheep).